We begin with the raw amino-acid sequence, 241 residues long: Probable transcriptional regulatory protein Maqu_2154 (241 aa).

This sequence belongs to the TACO1 family.

Its subcellular location is the cytoplasm. The chain is Probable transcriptional regulatory protein Maqu_2154 from Marinobacter nauticus (strain ATCC 700491 / DSM 11845 / VT8) (Marinobacter aquaeolei).